A 145-amino-acid chain; its full sequence is D-aminoacyl-tRNA deacylase (145 aa).

A Gly-cisPro motif, important for rejection of L-amino acids motif is present at residues 137-138 (GP).

The protein belongs to the DTD family. In terms of assembly, homodimer.

It is found in the cytoplasm. It carries out the reaction glycyl-tRNA(Ala) + H2O = tRNA(Ala) + glycine + H(+). It catalyses the reaction a D-aminoacyl-tRNA + H2O = a tRNA + a D-alpha-amino acid + H(+). Functionally, an aminoacyl-tRNA editing enzyme that deacylates mischarged D-aminoacyl-tRNAs. Also deacylates mischarged glycyl-tRNA(Ala), protecting cells against glycine mischarging by AlaRS. Acts via tRNA-based rather than protein-based catalysis; rejects L-amino acids rather than detecting D-amino acids in the active site. By recycling D-aminoacyl-tRNA to D-amino acids and free tRNA molecules, this enzyme counteracts the toxicity associated with the formation of D-aminoacyl-tRNA entities in vivo and helps enforce protein L-homochirality. This is D-aminoacyl-tRNA deacylase from Yersinia enterocolitica serotype O:8 / biotype 1B (strain NCTC 13174 / 8081).